The primary structure comprises 145 residues: Putative antiporter subunit mnhG2 (145 aa).

Helical transmembrane passes span 11-31 (IAAV…IGIV), 51-71 (VLLT…FFSV), and 72-92 (RLLL…HLVA).

Belongs to the CPA3 antiporters (TC 2.A.63) subunit G family. As to quaternary structure, may form a heterooligomeric complex that consists of seven subunits: mnhA2, mnhB2, mnhC2, mnhD2, mnhE2, mnhF2 and mnhG2.

It localises to the cell membrane. This Staphylococcus aureus (strain COL) protein is Putative antiporter subunit mnhG2 (mnhG2).